The following is a 78-amino-acid chain: Large ribosomal subunit protein bL28 (78 aa).

It belongs to the bacterial ribosomal protein bL28 family.

This chain is Large ribosomal subunit protein bL28, found in Acinetobacter baylyi (strain ATCC 33305 / BD413 / ADP1).